The chain runs to 574 residues: Actin-binding protein wsp1 (574 aa).

In terms of domain architecture, WH1 spans 19 to 130 (IPKSTNKIIA…KKVLDKGCHP (112 aa)). Disordered stretches follow at residues 144–186 (KGSS…ELLN), 221–494 (AGTP…IAEL), and 517–574 (KSRK…DEWD). Positions 149-158 (HAPNNSNIQP) are enriched in polar residues. Pro residues-rich tracts occupy residues 230-240 (PPIPPSIPSSR) and 251-260 (PAPPPIPPPS). 2 stretches are compositionally biased toward low complexity: residues 297–306 (SRVSAAALAA) and 324–335 (KPPIGNGSSNSS). Residues 352–368 (PLPPQGRSAPPPPPPRS) show a composition bias toward pro residues. S386 carries the post-translational modification Phosphoserine. Positions 415 to 485 (PPVPTPPSLP…PPPAPAPAPA (71 aa)) are enriched in pro residues. The 20-residue stretch at 499-518 (GRANLMASIRASGGMDLLKS) folds into the WH2 domain. Polar residues predominate over residues 521 to 545 (VSASPSVASTKTSNPPVEAPPSNNL). A compositionally biased stretch (acidic residues) spans 563 to 574 (SDEEDEDDDEWD).

In terms of assembly, interacts with vrp1.

It is found in the cytoplasm. It localises to the cytoskeleton. Has a role in regulating actin assembly, so regulating polarized growth. This chain is Actin-binding protein wsp1 (wsp1), found in Schizosaccharomyces pombe (strain 972 / ATCC 24843) (Fission yeast).